We begin with the raw amino-acid sequence, 64 residues long: Probable tautomerase lp_1712 (64 aa).

P2 acts as the Proton acceptor; via imino nitrogen in catalysis.

It belongs to the 4-oxalocrotonate tautomerase family.

This chain is Probable tautomerase lp_1712, found in Lactiplantibacillus plantarum (strain ATCC BAA-793 / NCIMB 8826 / WCFS1) (Lactobacillus plantarum).